Consider the following 443-residue polypeptide: Cyclic GMP-AMP synthase (443 aa).

S61 is a binding site for ATP. Active-site residues include D78 and D80. D80 provides a ligand contact to Mg(2+). N124 is an ATP binding site. Residue D138 is part of the active site. Residue D138 coordinates Mg(2+). Residue L208 coordinates ATP.

The protein belongs to the CD-NTase family. B06 subfamily. Requires Mg(2+) as cofactor.

The enzyme catalyses GTP + ATP = 3',3'-cGAMP + 2 diphosphate. The catalysed reaction is UTP + ATP = 3',3'-cUAMP + 2 diphosphate. It catalyses the reaction 2 ATP = 3',3'-c-di-AMP + 2 diphosphate. It carries out the reaction 2 GTP = 3',3'-c-di-GMP + 2 diphosphate. The enzyme catalyses UTP + GTP = 3',3'-cGMP-UMP + 2 diphosphate. In terms of biological role, cyclic nucleotide synthase (second messenger synthase) of a CBASS antivirus system. CBASS (cyclic oligonucleotide-based antiphage signaling system) provides immunity against bacteriophages. The CD-NTase protein (CdnB, this protein) synthesizes cyclic nucleotides in response to infection; these serve as specific second messenger signals. The signals activate a diverse range of effectors, leading to bacterial cell death and thus abortive phage infection. The effector protein for this system is membrane protein Cap15. Its function is as follows. Catalyzes the synthesis of 3',3'-cyclic GMP-AMP (3'3'-cGAMP) from GTP and ATP, a second messenger in cell signal transduction. Also makes cyclic UMP-AMP, cyclic UMP-GMP, cyclic di-AMP and cyclic-di-GMP. Protects E.coli against phage infection. When the CBASS operon (cdnB-cap15) is introduced in E.coli MG1655 there is about 100-fold protection against phage T2 and about 10-fold protection against phage T5 and T6. This chain is Cyclic GMP-AMP synthase, found in Escherichia albertii.